Consider the following 443-residue polypeptide: Cysteine proteinase B (443 aa).

A signal peptide spans 1–27 (MATSRAALCAVAVVCVVLAAACAPARA). Positions 28–125 (IHVGTPAAAL…YRKARADLSA (98 aa)) are cleaved as a propeptide — activation peptide. 2 disulfide bridges follow: Cys-147–Cys-188 and Cys-181–Cys-226. The active site involves Cys-150. Asn-228 carries an N-linked (GlcNAc...) asparagine glycan. A disulfide bridge links Cys-281 with Cys-329. Catalysis depends on residues His-288 and Asn-308.

This sequence belongs to the peptidase C1 family.

The sequence is that of Cysteine proteinase B (LMCPB) from Leishmania mexicana.